Consider the following 298-residue polypeptide: Putative S-adenosyl-L-methionine-dependent methyltransferase MSMEG_1480/MSMEI_1444 (298 aa).

S-adenosyl-L-methionine contacts are provided by residues Asp-127 and 156 to 157 (DL).

This sequence belongs to the UPF0677 family.

Its function is as follows. Exhibits S-adenosyl-L-methionine-dependent methyltransferase activity. This is Putative S-adenosyl-L-methionine-dependent methyltransferase MSMEG_1480/MSMEI_1444 from Mycolicibacterium smegmatis (strain ATCC 700084 / mc(2)155) (Mycobacterium smegmatis).